A 400-amino-acid chain; its full sequence is Phosphoglycerate kinase (400 aa).

Residues 21–23 (DFN), Arg-37, 60–63 (HLGR), Arg-121, and Arg-154 contribute to the substrate site. Residues Lys-204, Glu-326, and 355–358 (GGDS) contribute to the ATP site.

The protein belongs to the phosphoglycerate kinase family. Monomer.

The protein localises to the cytoplasm. It catalyses the reaction (2R)-3-phosphoglycerate + ATP = (2R)-3-phospho-glyceroyl phosphate + ADP. It functions in the pathway carbohydrate degradation; glycolysis; pyruvate from D-glyceraldehyde 3-phosphate: step 2/5. The chain is Phosphoglycerate kinase from Chloroflexus aggregans (strain MD-66 / DSM 9485).